Here is a 183-residue protein sequence, read N- to C-terminus: Capsid protein (183 aa).

The disordered stretch occupies residues 136 to 183 (NAPILSTLPETTVVRRRGRSPRRRTPSPRRRRSQSPRRRRSQSRESQC). Over residues 149-176 (VRRRGRSPRRRTPSPRRRRSQSPRRRRS) the composition is skewed to basic residues. Phosphoserine; by host occurs at positions 155, 162, and 170. The stretch at 155 to 161 (SPRRRTP) is one 1; half-length repeat. The segment at 155-177 (SPRRRTPSPRRRRSQSPRRRRSQ) is 3 X 8 AA repeats of S-P-R-R-R-[PR]-S-Q. The Bipartite nuclear localization signal motif lies at 158 to 175 (RRTPSPRRRRSQSPRRRR). Repeat copies occupy residues 162 to 169 (SPRRRRSQ) and 170 to 177 (SPRRRRSQ). Positions 177 to 183 (QSRESQC) are RNA binding.

Belongs to the orthohepadnavirus core antigen family. As to quaternary structure, homodimerizes, then multimerizes. Interacts with cytosol exposed regions of viral L glycoprotein present in the reticulum-to-Golgi compartment. Interacts with human FLNB. Phosphorylated form interacts with host importin alpha; this interaction depends on the exposure of the NLS, which itself depends upon genome maturation and/or phosphorylation of the capsid protein. Interacts with host NUP153. Phosphorylated by host SRPK1, SRPK2, and maybe protein kinase C or GAPDH. Phosphorylation is critical for pregenomic RNA packaging. Protein kinase C phosphorylation is stimulated by HBx protein and may play a role in transport of the viral genome to the nucleus at the late step during the viral replication cycle.

The protein localises to the virion. It is found in the host cytoplasm. Self assembles to form an icosahedral capsid. Most capsids appear to be large particles with an icosahedral symmetry of T=4 and consist of 240 copies of capsid protein, though a fraction forms smaller T=3 particles consisting of 180 capsid proteins. Entering capsids are transported along microtubules to the nucleus. Phosphorylation of the capsid is thought to induce exposure of nuclear localization signal in the C-terminal portion of the capsid protein that allows binding to the nuclear pore complex via the importin (karyopherin-) alpha and beta. Capsids are imported in intact form through the nuclear pore into the nuclear basket, where it probably binds NUP153. Only capsids that contain the mature viral genome can release the viral DNA and capsid protein into the nucleoplasm. Immature capsids get stuck in the basket. Capsids encapsulate the pre-genomic RNA and the P protein. Pre-genomic RNA is reverse-transcribed into DNA while the capsid is still in the cytoplasm. The capsid can then either be directed to the nucleus, providing more genomes for transcription, or bud through the endoplasmic reticulum to provide new virions. The sequence is that of Capsid protein from Hepatitis B virus genotype D subtype ayw (isolate France/Tiollais/1979) (HBV-D).